The chain runs to 318 residues: MARKKIALIGGGQIGGVLAQLSALRELGDVVLFDIVEGLPQGKTLDIAEASPVDNFDAALTGANDYADIKGADIVIVTAGLPRKPGMSRDDLIATNAKIMQSVSEGIKQYAPNSFVIVISNPLDAMVTLCQKITGFPSSRVMGMAGVLDSARFAAFIAWELGVSVKDVNAMVLGGHGDTMVPIIRYANVNGVPVMELIERKYNGDKAKAKEVMAALVKRTQGAGGEVVGLLKTGSAFYSPASSAIAMAEAILRDQKRLLPVCALLNGEFGVKGYYVGVPCILGANGIEKIVEFSLDAEEQAMFDNSVAAVKELVDSMK.

NAD(+) contacts are provided by residues 10-15 and aspartate 34; that span reads GGGQIG. Substrate contacts are provided by arginine 83 and arginine 89. NAD(+) is bound by residues asparagine 96 and 119-121; that span reads ISN. Asparagine 121 and arginine 152 together coordinate substrate. Histidine 176 (proton acceptor) is an active-site residue.

It belongs to the LDH/MDH superfamily. MDH type 3 family.

The enzyme catalyses (S)-malate + NAD(+) = oxaloacetate + NADH + H(+). Functionally, catalyzes the reversible oxidation of malate to oxaloacetate. In Geotalea daltonii (strain DSM 22248 / JCM 15807 / FRC-32) (Geobacter daltonii), this protein is Malate dehydrogenase.